Here is a 98-residue protein sequence, read N- to C-terminus: Integration host factor subunit alpha (98 aa).

The disordered stretch occupies residues 52–73 (FDLREKNQRPGRNPKTGEDIPI).

It belongs to the bacterial histone-like protein family. As to quaternary structure, heterodimer of an alpha and a beta chain.

In terms of biological role, this protein is one of the two subunits of integration host factor, a specific DNA-binding protein that functions in genetic recombination as well as in transcriptional and translational control. This Aeromonas hydrophila subsp. hydrophila (strain ATCC 7966 / DSM 30187 / BCRC 13018 / CCUG 14551 / JCM 1027 / KCTC 2358 / NCIMB 9240 / NCTC 8049) protein is Integration host factor subunit alpha.